Here is a 457-residue protein sequence, read N- to C-terminus: uncharacterized protein (457 aa).

14 helical membrane passes run tyrosine 15–alanine 35, isoleucine 54–leucine 74, glycine 87–leucine 107, valine 112–isoleucine 132, isoleucine 144–leucine 164, isoleucine 166–leucine 186, leucine 205–phenylalanine 225, glutamine 229–isoleucine 249, leucine 269–valine 289, leucine 308–isoleucine 328, glycine 334–leucine 354, serine 357–phenylalanine 377, methionine 400–leucine 420, and threonine 428–leucine 448.

Belongs to the major facilitator superfamily. TCR/Tet family.

The protein resides in the cell inner membrane. This is an uncharacterized protein from Escherichia coli (strain K12).